The chain runs to 460 residues: Ammonium transporter Rh type B-A (460 aa).

The Cytoplasmic segment spans residues 1–10 (MTGYSTNMRI). The chain crosses the membrane as a helical span at residues 11–31 (KLPLFCLILQFITIILFAVFV). The Extracellular portion of the chain corresponds to 32–62 (RYDHESDARGWHDELKNHSTANADNDFYFRY). Asn-48 carries N-linked (GlcNAc...) asparagine glycosylation. The chain crosses the membrane as a helical span at residues 63–83 (PSFQDVHVMIFIGFGFLMTFL). Residues 84-87 (KRYG) are Cytoplasmic-facing. The helical transmembrane segment at 88-108 (FSSVAFNFLIAAFGLQWSTLI) threads the bilayer. Topologically, residues 109-125 (QGFFHGFHDGKIHVGIE) are extracellular. Residues 126 to 146 (SMINADFCTGAVLISFGAVLG) traverse the membrane as a helical segment. The Cytoplasmic segment spans residues 147 to 150 (KTSP). The helical transmembrane segment at 151-171 (VQLIVMTLIEVTLFGINEYII) threads the bilayer. At 172–179 (LNIVGAKD) the chain is on the extracellular side. Residues 180–202 (AGGSMTIHTFGAYFGLIVSRVLY) traverse the membrane as a helical segment. Over 203-220 (RADLDKSRQREGSVYHSD) the chain is Cytoplasmic. The helical transmembrane segment at 221-241 (LFAMIGTIYLWMFWPSFNSAV) threads the bilayer. Topologically, residues 242–252 (TAHGDDQHRTV) are extracellular. Residues 253 to 273 (LNTYYSLAACTLATFGFSALL) traverse the membrane as a helical segment. Residues 274–283 (NGEGKLDMVH) are Cytoplasmic-facing. A helical membrane pass occupies residues 284-304 (IQNAALAGGVAVGTSGEMMLT). A topological domain (extracellular) is located at residue Pro-305. A helical membrane pass occupies residues 306–326 (FGAMIAGTLAGIVSVLGYKYL). Residues 327–347 (TPVLDSKLKIQDTCGVHNLHG) are Cytoplasmic-facing. A helical transmembrane segment spans residues 348 to 368 (MPGILGAVIGAIVALFATADI). The Extracellular segment spans residues 369 to 394 (YGDGMDDVFPMIFDGSRTAKQQSLYQ). Residues 395–415 (FLALLVALGFAIVGGTVVGFI) form a helical membrane-spanning segment. The Cytoplasmic segment spans residues 416–460 (LKLPLFGTPSDAECFEDAVYWEVPGGEGHQQLTVVVNNEDPDTQA).

The protein belongs to the ammonium transporter (TC 2.A.49) family. Rh subfamily.

The protein localises to the basolateral cell membrane. Its subcellular location is the cytoplasmic vesicle membrane. In terms of biological role, functions as a specific ammonium transporter. This chain is Ammonium transporter Rh type B-A (rhbg-a), found in Xenopus laevis (African clawed frog).